Consider the following 191-residue polypeptide: MAP6 domain-containing protein 1 (191 aa).

S-palmitoyl cysteine attachment occurs at residues Cys5, Cys10, and Cys11. Residues 31–106 (HGYSDPGSEE…RGQSSAPPTR (76 aa)) form a disordered region. 2 positions are modified to phosphoserine: Ser38 and Ser41. Mn stretches follow at residues 123–136 (TTSY…WTGV) and 158–170 (DPSP…VPEV). Ser160 bears the Phosphoserine mark.

The protein belongs to the STOP family. In terms of assembly, interacts with calmodulin. In terms of processing, palmitoylated. Palmitoylation enhances association with microtubules. In terms of tissue distribution, expressed in brain. Found in neurons in primary cultures, but absent in glial cells.

It is found in the golgi apparatus. The protein localises to the cytoplasm. Its subcellular location is the cytoskeleton. In terms of biological role, may have microtubule-stabilizing activity. The polypeptide is MAP6 domain-containing protein 1 (Map6d1) (Mus musculus (Mouse)).